Consider the following 426-residue polypeptide: Glutamate-1-semialdehyde 2,1-aminomutase (426 aa).

K265 is modified (N6-(pyridoxal phosphate)lysine).

Belongs to the class-III pyridoxal-phosphate-dependent aminotransferase family. HemL subfamily. Homodimer. Pyridoxal 5'-phosphate is required as a cofactor.

Its subcellular location is the cytoplasm. It catalyses the reaction (S)-4-amino-5-oxopentanoate = 5-aminolevulinate. It functions in the pathway porphyrin-containing compound metabolism; protoporphyrin-IX biosynthesis; 5-aminolevulinate from L-glutamyl-tRNA(Glu): step 2/2. The protein is Glutamate-1-semialdehyde 2,1-aminomutase of Klebsiella pneumoniae subsp. pneumoniae (strain ATCC 700721 / MGH 78578).